Consider the following 254-residue polypeptide: uncharacterized protein (254 aa).

The signal sequence occupies residues 1–22 (MKRLKKIVLCISFLFLTIFIGG). Residue Cys23 is the site of N-palmitoyl cysteine attachment. Cys23 carries the S-diacylglycerol cysteine lipid modification.

The protein belongs to the staphylococcal tandem lipoprotein family.

The protein resides in the cell membrane. This is an uncharacterized protein from Staphylococcus aureus (strain MSSA476).